A 412-amino-acid polypeptide reads, in one-letter code: Citrate synthase (412 aa).

Active-site residues include His-305 and Asp-364.

The protein belongs to the citrate synthase family.

It catalyses the reaction oxaloacetate + acetyl-CoA + H2O = citrate + CoA + H(+). The protein operates within carbohydrate metabolism; tricarboxylic acid cycle; isocitrate from oxaloacetate: step 1/2. This is Citrate synthase (gltA) from Rickettsia bellii.